The primary structure comprises 516 residues: Protein DML1 (516 aa).

It belongs to the misato family.

It localises to the mitochondrion. Its function is as follows. Involved in the partitioning of the mitochondrial organelle and mitochondrial DNA (mtDNA) inheritance. The polypeptide is Protein DML1 (DML1) (Coccidioides immitis (strain RS) (Valley fever fungus)).